The sequence spans 388 residues: Chaperone protein DnaJ (388 aa).

The 66-residue stretch at 5 to 70 (DYYTTLNISN…KKRNLYDQYG (66 aa)) folds into the J domain. A CR-type zinc finger spans residues 135–213 (GIKKEIRIPK…CFGQGRIKKS (79 aa)). Zn(2+)-binding residues include Cys-148, Cys-151, Cys-165, Cys-168, Cys-187, Cys-190, Cys-201, and Cys-204. CXXCXGXG motif repeat units lie at residues 148–155 (CQSCYGYG), 165–172 (CTSCNGHG), 187–194 (CSTCRGTG), and 201–208 (CKICFGQG).

This sequence belongs to the DnaJ family. As to quaternary structure, homodimer. Requires Zn(2+) as cofactor.

It localises to the cytoplasm. Functionally, participates actively in the response to hyperosmotic and heat shock by preventing the aggregation of stress-denatured proteins and by disaggregating proteins, also in an autonomous, DnaK-independent fashion. Unfolded proteins bind initially to DnaJ; upon interaction with the DnaJ-bound protein, DnaK hydrolyzes its bound ATP, resulting in the formation of a stable complex. GrpE releases ADP from DnaK; ATP binding to DnaK triggers the release of the substrate protein, thus completing the reaction cycle. Several rounds of ATP-dependent interactions between DnaJ, DnaK and GrpE are required for fully efficient folding. Also involved, together with DnaK and GrpE, in the DNA replication of plasmids through activation of initiation proteins. The polypeptide is Chaperone protein DnaJ (Buchnera aphidicola subsp. Cinara cedri (strain Cc)).